A 1953-amino-acid chain; its full sequence is TATA-binding protein-associated factor mot1 (1953 aa).

One copy of the HEAT 1 repeat lies at 36–74 (PDELYNLLGRVVPYLKSKNWDTRVAAAKAIGGIVENVPV). Residues 79 to 141 (RTSPVKKEET…KLEEERLSTR (63 aa)) are disordered. Positions 98 to 108 (TEEKPFIKTEE) are enriched in basic and acidic residues. Low complexity predominate over residues 113–130 (SSQSQVVVSSNLTSNSEV). Over residues 131–141 (SKLEEERLSTR) the composition is skewed to basic and acidic residues. Ser144 carries the post-translational modification Phosphoserine. The interval 240 to 278 (DNVGSNSKGSPTTSIPEHKTSINNNKPEDTPTPSENVHL) is disordered. Residues 242-276 (VGSNSKGSPTTSIPEHKTSINNNKPEDTPTPSENV) are compositionally biased toward polar residues. 4 HEAT repeats span residues 358–396 (VWPFETLVELLLIDMFDPSWEIRHGACMGLREIIRYAGF), 513–551 (SDYLDSLINTVIHGLANHDDDVRAVSALTLLPIADKLVQ), 554–592 (LSSCKNLLKVLWDCLDDVKDDLSSSTSCVMDLLSSLCSF), and 608–646 (EFSFETLVPRLFHLMRYTLTGVRRSVVYALTKFISVQTS). Disordered stretches follow at residues 730–762 (SGQPYAPSTSRERNNNISELSNSRTKHRAKDDP) and 1078–1103 (DDNDEQVSGKLVDDSDDVSNDRKSSL). 2 HEAT repeats span residues 1191–1229 (QSEIVSTLPHLLATLQSNYSAVRNMASKCFAAITESNAA) and 1270–1311 (VRIL…LVPL). The Helicase ATP-binding domain maps to 1370-1543 (AFLNKYELHG…WSLFDFLMPG (174 aa)). 1383-1390 (DDMGLGKT) provides a ligand contact to ATP. A DEGH box motif is present at residues 1494–1497 (DEGH). Residues 1580-1623 (EAIHKQVLPFMLRRLKEDVLADLPPKIIQDYYCDMSDLQRKLLN) form an HEAT 8 repeat. The region spanning 1725 to 1877 (GIDSALTNAV…STVVNQQNAG (153 aa)) is the Helicase C-terminal domain. Positions 1901-1920 (QNIDKEESEDAAGRGLSGTS) are disordered.

It belongs to the SNF2/RAD54 helicase family. As to quaternary structure, forms a complex with TBP which binds TATA DNA.

The protein localises to the nucleus. Its function is as follows. Regulates transcription in association with TATA binding protein (TBP). Removes TBP from the TATA box via its ATPase activity. This is TATA-binding protein-associated factor mot1 from Schizosaccharomyces pombe (strain 972 / ATCC 24843) (Fission yeast).